The chain runs to 948 residues: Valine--tRNA ligase (948 aa).

The short motif at 40-50 (PNVTGSLHMGH) is the 'HIGH' region element. The 'KMSKS' region motif lies at 551–555 (KMSKS). K554 serves as a coordination point for ATP. The stretch at 879-945 (LIDKGAELAR…GKLAEQHARI (67 aa)) forms a coiled coil.

This sequence belongs to the class-I aminoacyl-tRNA synthetase family. ValS type 1 subfamily. Monomer.

The protein resides in the cytoplasm. It carries out the reaction tRNA(Val) + L-valine + ATP = L-valyl-tRNA(Val) + AMP + diphosphate. Catalyzes the attachment of valine to tRNA(Val). As ValRS can inadvertently accommodate and process structurally similar amino acids such as threonine, to avoid such errors, it has a 'posttransfer' editing activity that hydrolyzes mischarged Thr-tRNA(Val) in a tRNA-dependent manner. The polypeptide is Valine--tRNA ligase (Pseudomonas savastanoi pv. phaseolicola (strain 1448A / Race 6) (Pseudomonas syringae pv. phaseolicola (strain 1448A / Race 6))).